The primary structure comprises 577 residues: uncharacterized protein (577 aa).

Polar residues-rich tracts occupy residues 1-21 and 68-87; these read MSST…QSAS and SFQN…SKTE. 2 disordered regions span residues 1–24 and 68–93; these read MSST…SAHP and SFQN…PDDV. 12 helical membrane passes run 139–159, 174–194, 204–224, 232–252, 262–282, 292–312, 367–387, 402–422, 447–467, 473–493, 504–526, and 543–563; these read CILA…AVPA, LLTM…WAPL, ILIG…GKDI, FFAG…LADM, ITLF…VGGF, WTEY…YLFC, PICF…YLLL, MGVA…GSGI, LPPM…LSWS, VNWV…LLIF, YLFR…AAGF, and GSLL…FFFF.

It belongs to the major facilitator superfamily. CAR1 family.

It localises to the endoplasmic reticulum. The protein localises to the membrane. This is an uncharacterized protein from Schizosaccharomyces pombe (strain 972 / ATCC 24843) (Fission yeast).